The chain runs to 334 residues: Fructose-1,6-bisphosphatase class 1 (334 aa).

Mg(2+) contacts are provided by E91, D113, L115, and D116. Substrate contacts are provided by residues 116–119 (DGSS), N208, and K274. A Mg(2+)-binding site is contributed by E280.

This sequence belongs to the FBPase class 1 family. As to quaternary structure, homotetramer. Mg(2+) is required as a cofactor.

It is found in the cytoplasm. It catalyses the reaction beta-D-fructose 1,6-bisphosphate + H2O = beta-D-fructose 6-phosphate + phosphate. It functions in the pathway carbohydrate biosynthesis; gluconeogenesis. The chain is Fructose-1,6-bisphosphatase class 1 from Janthinobacterium sp. (strain Marseille) (Minibacterium massiliensis).